The primary structure comprises 485 residues: UDP-N-acetylmuramate--L-alanine ligase (485 aa).

120 to 126 (GSHGKTT) is an ATP binding site.

Belongs to the MurCDEF family.

The protein localises to the cytoplasm. The enzyme catalyses UDP-N-acetyl-alpha-D-muramate + L-alanine + ATP = UDP-N-acetyl-alpha-D-muramoyl-L-alanine + ADP + phosphate + H(+). Its pathway is cell wall biogenesis; peptidoglycan biosynthesis. Its function is as follows. Cell wall formation. The protein is UDP-N-acetylmuramate--L-alanine ligase of Rickettsia massiliae (strain Mtu5).